The following is a 154-amino-acid chain: Catabolic 3-dehydroquinase (154 aa).

Tyrosine 25 (proton acceptor) is an active-site residue. Residues asparagine 79, histidine 85, and aspartate 92 each contribute to the substrate site. The Proton donor role is filled by histidine 105. Substrate contacts are provided by residues 106–107 (IS) and arginine 116.

This sequence belongs to the type-II 3-dehydroquinase family. Homododecamer. Adopts a ring-like structure, composed of an arrangement of two hexameric rings stacked on top of one another.

The catalysed reaction is 3-dehydroquinate = 3-dehydroshikimate + H2O. It participates in aromatic compound metabolism; 3,4-dihydroxybenzoate biosynthesis; 3,4-dihydroxybenzoate from 3-dehydroquinate: step 1/2. Is involved in the catabolism of quinate. Allows the utilization of quinate as carbon source via the beta-ketoadipate pathway. The protein is Catabolic 3-dehydroquinase of Sclerotinia sclerotiorum (strain ATCC 18683 / 1980 / Ss-1) (White mold).